Consider the following 410-residue polypeptide: Putative transporter AmpG 1 (410 aa).

Helical transmembrane passes span 5–25 (LSII…TGNT), 40–60 (IGLL…APIF), 76–96 (LSWI…LSFL), 98–118 (PFDN…FSSM), 141–161 (GIYI…AIYL), 169–189 (EIYK…IVGV), 217–237 (ILKP…LILY), 265–285 (VGKF…GFIM), 290–310 (ILDS…LFII), 320–340 (LLFI…TAYI), 356–378 (YSFF…GYIV), and 383–402 (WQNF…LVLL).

The protein belongs to the major facilitator superfamily.

The protein localises to the cell inner membrane. This chain is Putative transporter AmpG 1 (ampG1), found in Rickettsia bellii (strain RML369-C).